The chain runs to 454 residues: Ornithine aminotransferase (454 aa).

Pyridoxal 5'-phosphate-binding residues include Gly-124, Thr-125, and Gln-267. Lys-293 carries the N6-(pyridoxal phosphate)lysine modification. Thr-321 contacts pyridoxal 5'-phosphate.

The protein belongs to the class-III pyridoxal-phosphate-dependent aminotransferase family. As to quaternary structure, homotetramer; dimer of dimers. The cofactor is pyridoxal 5'-phosphate.

The catalysed reaction is L-ornithine + 2-oxoglutarate = L-glutamate 5-semialdehyde + L-glutamate. It carries out the reaction L-lysine + 2-oxoglutarate = (S)-2-amino-6-oxohexanoate + L-glutamate. Functionally, catalyzes the conversion of L-ornithine and 2-oxoglutarate to L-glutamate semialdehyde and L-glutamate. L-ornithine is the best substrate, but the enzyme also shows good activity toward L-lysine, and low activity toward D-ornithine, D-lysine, 5-aminovalerate, 6-aminohexanoate and GABA. The enzyme activity is specific for 2-oxoglutarate. The chain is Ornithine aminotransferase from Pyrococcus horikoshii (strain ATCC 700860 / DSM 12428 / JCM 9974 / NBRC 100139 / OT-3).